The primary structure comprises 854 residues: Putative Tricorn-like protease C-terminal subunit (854 aa).

Catalysis depends on H539, which acts as the Charge relay system. Residues 554–646 are PDZ-like; it reads PIGGLGADYE…RVTVKLLKDE (93 aa). Position 709 (G709) interacts with substrate. Residue S756 is the Nucleophile of the active site. E814 serves as the catalytic Charge relay system.

The protein belongs to the peptidase S41B family.

The protein localises to the cytoplasm. Its function is as follows. Degrades oligopeptides in a sequential manner. The sequence is that of Putative Tricorn-like protease C-terminal subunit (triC) from Sulfurisphaera tokodaii (strain DSM 16993 / JCM 10545 / NBRC 100140 / 7) (Sulfolobus tokodaii).